The chain runs to 257 residues: tRNA (guanine-N(7)-)-methyltransferase (257 aa).

Residues Met-1–Arg-42 form a disordered region. Residues Glu-84, Glu-109, Asp-136, and Asp-158 each coordinate S-adenosyl-L-methionine. Asp-158 is an active-site residue. Residues Lys-162 and Asp-194 each coordinate substrate.

It belongs to the class I-like SAM-binding methyltransferase superfamily. TrmB family.

The enzyme catalyses guanosine(46) in tRNA + S-adenosyl-L-methionine = N(7)-methylguanosine(46) in tRNA + S-adenosyl-L-homocysteine. Its pathway is tRNA modification; N(7)-methylguanine-tRNA biosynthesis. In terms of biological role, catalyzes the formation of N(7)-methylguanine at position 46 (m7G46) in tRNA. This Nitrobacter winogradskyi (strain ATCC 25391 / DSM 10237 / CIP 104748 / NCIMB 11846 / Nb-255) protein is tRNA (guanine-N(7)-)-methyltransferase.